Consider the following 370-residue polypeptide: GDSL esterase/lipase At1g09390 (370 aa).

Positions 1-27 (MATLSLHSHSFLLVLLPFILILRQNLA) are cleaved as a signal peptide. S44 acts as the Nucleophile in catalysis. 2 N-linked (GlcNAc...) asparagine glycosylation sites follow: N90 and N315. Active-site residues include D336 and H339.

Belongs to the 'GDSL' lipolytic enzyme family.

The protein localises to the secreted. The protein is GDSL esterase/lipase At1g09390 of Arabidopsis thaliana (Mouse-ear cress).